Consider the following 518-residue polypeptide: G1/S-specific cyclin-E (518 aa).

Residues 1–193 (MAGRKSSRTT…DEETEDEFDL (193 aa)) are disordered. The segment covering 13 to 46 (PVKKAERKSAILSPHDELRERLLETSLDVKENIP) has biased composition (basic and acidic residues). Over residues 47 to 62 (ERSSSTRNESVGSQRS) the composition is skewed to polar residues. Over residues 82–107 (PSTEKKGNGSRDDSFSSVFSEDRETE) the composition is skewed to basic and acidic residues. The segment covering 108-119 (SSVGSTSSRTRG) has biased composition (low complexity). Over residues 135–154 (SSDHNAESEESRETPQSDEH) the composition is skewed to basic and acidic residues. Over residues 155-192 (DGFEEDGDVEDDVSSDVNDEEDEYDEYEEDEETEDEFD) the composition is skewed to acidic residues.

It belongs to the cyclin family. Cyclin E subfamily. As to quaternary structure, interacts with a member of the CDK2/CDK protein kinases to form a serine/threonine kinase holoenzyme complex. The cyclin subunit imparts substrate specificity to the complex.

Its subcellular location is the nucleus. It is found in the cytoplasm. It localises to the cytoskeleton. The protein localises to the microtubule organizing center. The protein resides in the centrosome. Its subcellular location is the centriole. Essential for the control of the cell cycle at the G1/S (start) transition. In association with cdk-2, regulates proliferation, quiescent state and cell fate during the development of several cell lineages. In the embryo, initiates the establishment of cell polarity through the recruitment of the centrosomal proteins spd-2 and spd-5 during prophase. During the development of the vulva, controls the onset of vulval cell terminal differentiation by controlling the duration of G1 phase. During hypoderm development at early larval stages, controls syncytial fate of seam cell daughter cells. Involved in the progression of cell division in the intestinal lineage in larvae, and in particular in endoreplication, a specific growth pathway in the intestinal epithelium, required for feeding and gut development in growing larvae. By controlling the activity of translational repressor gld-1, regulates the pool of germline stem cells and the size of the mitotic zone by preventing entry into meiosis. In addition, repression of expression by gld-1 prevents mitosis re-entry in meiotic germline cells. This is G1/S-specific cyclin-E (cye-1) from Caenorhabditis briggsae.